A 239-amino-acid polypeptide reads, in one-letter code: 7-cyano-7-deazaguanine synthase (239 aa).

12–22 (FSGGQDSATCL) lines the ATP pocket. Residues Cys200, Cys215, Cys218, and Cys221 each contribute to the Zn(2+) site.

This sequence belongs to the QueC family. Zn(2+) serves as cofactor.

It carries out the reaction 7-carboxy-7-deazaguanine + NH4(+) + ATP = 7-cyano-7-deazaguanine + ADP + phosphate + H2O + H(+). It functions in the pathway purine metabolism; 7-cyano-7-deazaguanine biosynthesis. Catalyzes the ATP-dependent conversion of 7-carboxy-7-deazaguanine (CDG) to 7-cyano-7-deazaguanine (preQ(0)). The polypeptide is 7-cyano-7-deazaguanine synthase (Hyphomonas neptunium (strain ATCC 15444)).